We begin with the raw amino-acid sequence, 227 residues long: Cytochrome c oxidase subunit 2 (227 aa).

Residues 1–14 (MAHPVQLGLQDATS) lie on the Mitochondrial intermembrane side of the membrane. The chain crosses the membrane as a helical span at residues 15-45 (PVMEELVTFHDHALMAMFLISFLILYALSAT). The Mitochondrial matrix segment spans residues 46 to 59 (LTTKLTNTNITDAQ). A helical transmembrane segment spans residues 60–87 (EMETIWTILPAVILVLIALPSLRILYMT). Topologically, residues 88–227 (DEINNPSFTI…IFEMGPVFTL (140 aa)) are mitochondrial intermembrane. Cu cation-binding residues include histidine 161, cysteine 196, glutamate 198, cysteine 200, histidine 204, and methionine 207. Position 198 (glutamate 198) interacts with Mg(2+).

This sequence belongs to the cytochrome c oxidase subunit 2 family. In terms of assembly, component of the cytochrome c oxidase (complex IV, CIV), a multisubunit enzyme composed of 14 subunits. The complex is composed of a catalytic core of 3 subunits MT-CO1, MT-CO2 and MT-CO3, encoded in the mitochondrial DNA, and 11 supernumerary subunits COX4I, COX5A, COX5B, COX6A, COX6B, COX6C, COX7A, COX7B, COX7C, COX8 and NDUFA4, which are encoded in the nuclear genome. The complex exists as a monomer or a dimer and forms supercomplexes (SCs) in the inner mitochondrial membrane with NADH-ubiquinone oxidoreductase (complex I, CI) and ubiquinol-cytochrome c oxidoreductase (cytochrome b-c1 complex, complex III, CIII), resulting in different assemblies (supercomplex SCI(1)III(2)IV(1) and megacomplex MCI(2)III(2)IV(2)). Found in a complex with TMEM177, COA6, COX18, COX20, SCO1 and SCO2. Interacts with TMEM177 in a COX20-dependent manner. Interacts with COX20. Interacts with COX16. The cofactor is Cu cation.

The protein localises to the mitochondrion inner membrane. It catalyses the reaction 4 Fe(II)-[cytochrome c] + O2 + 8 H(+)(in) = 4 Fe(III)-[cytochrome c] + 2 H2O + 4 H(+)(out). Its function is as follows. Component of the cytochrome c oxidase, the last enzyme in the mitochondrial electron transport chain which drives oxidative phosphorylation. The respiratory chain contains 3 multisubunit complexes succinate dehydrogenase (complex II, CII), ubiquinol-cytochrome c oxidoreductase (cytochrome b-c1 complex, complex III, CIII) and cytochrome c oxidase (complex IV, CIV), that cooperate to transfer electrons derived from NADH and succinate to molecular oxygen, creating an electrochemical gradient over the inner membrane that drives transmembrane transport and the ATP synthase. Cytochrome c oxidase is the component of the respiratory chain that catalyzes the reduction of oxygen to water. Electrons originating from reduced cytochrome c in the intermembrane space (IMS) are transferred via the dinuclear copper A center (CU(A)) of subunit 2 and heme A of subunit 1 to the active site in subunit 1, a binuclear center (BNC) formed by heme A3 and copper B (CU(B)). The BNC reduces molecular oxygen to 2 water molecules using 4 electrons from cytochrome c in the IMS and 4 protons from the mitochondrial matrix. This chain is Cytochrome c oxidase subunit 2 (MT-CO2), found in Theropithecus gelada (Gelada baboon).